The chain runs to 433 residues: MTASLKAIDGAADPGAELAAMMTALGAQARAAARVLAIAPTAQKNEALAAMERAIRAHTPAILQANAEDVAEARAGGATDAFIDRLTLTEARVAVMADGIGVIHDIADPVGQVTERWQRPNGMTIERVRVPLGVIAVIFESRPNVAADAGVLALKSGNAVILRGGSDSFRSCRAIHDCLVEGLREAGLPEAAITRVPVRDRAAVGLLLGGLDGNVDVIVPRGGKSLVARVEAEARVPVFAHLEGINHVYVDRAADLDMAKSIVLNAKMRRPGVCGAAETLLIDRAAASNLAPLVTTLLEAGCEVRGDDAVQRVDPRVKPVAEEDWDTEYEAAIMSVKLVDGVDAALAHIAQHGSHHTEAIVTADQSVASKFLNEVDAAIVLHNASTQFADGGEFGFGAEIGIATGKFHARGPVGAEQLTSFKYRVHGTGQIRP.

Belongs to the gamma-glutamyl phosphate reductase family.

It localises to the cytoplasm. It carries out the reaction L-glutamate 5-semialdehyde + phosphate + NADP(+) = L-glutamyl 5-phosphate + NADPH + H(+). The protein operates within amino-acid biosynthesis; L-proline biosynthesis; L-glutamate 5-semialdehyde from L-glutamate: step 2/2. Functionally, catalyzes the NADPH-dependent reduction of L-glutamate 5-phosphate into L-glutamate 5-semialdehyde and phosphate. The product spontaneously undergoes cyclization to form 1-pyrroline-5-carboxylate. This chain is Gamma-glutamyl phosphate reductase, found in Rhodopseudomonas palustris (strain BisB18).